The primary structure comprises 184 residues: Urease accessory protein UreE (184 aa).

A disordered region spans residues 147 to 184 (EHHGHSHSHSHSHDHDHDHDHDHQHGPSCSHGHHHGHR). The segment covering 157–171 (HSHDHDHDHDHDHQH) has biased composition (basic and acidic residues).

It belongs to the UreE family.

The protein resides in the cytoplasm. Its function is as follows. Involved in urease metallocenter assembly. Binds nickel. Probably functions as a nickel donor during metallocenter assembly. This is Urease accessory protein UreE from Burkholderia mallei (strain ATCC 23344).